We begin with the raw amino-acid sequence, 428 residues long: Histidine--tRNA ligase (428 aa).

Belongs to the class-II aminoacyl-tRNA synthetase family. Homodimer.

Its subcellular location is the cytoplasm. The catalysed reaction is tRNA(His) + L-histidine + ATP = L-histidyl-tRNA(His) + AMP + diphosphate + H(+). The chain is Histidine--tRNA ligase from Sorangium cellulosum (strain So ce56) (Polyangium cellulosum (strain So ce56)).